Here is a 296-residue protein sequence, read N- to C-terminus: MSQPLLQSHLTSLPLIHRGKVRDLYAVGDDHLLIVTTDRVSAFDVILPTPIPGKGEVLTKISEFWFRKLEHIVPNQLADMSLAEAVPDAAERAPLEGRSLVVKRLKALPIEAVVRGYLIGSGWKDYQKTGQVCGNPLPAGLQLADRLPEPIYTPSTKAAVGDHDENVDFDYTAELVGPELAAQVRQTALALYKAAAEYALARGIIIADTKFEFGLDDEGVLHLIDEALTPDSSRFWPADTYRPGISPPSFDKQFVRDYLETLDWNKQAPGPELPPDVVQKTTEKYREALLRLTGAS.

This sequence belongs to the SAICAR synthetase family.

It carries out the reaction 5-amino-1-(5-phospho-D-ribosyl)imidazole-4-carboxylate + L-aspartate + ATP = (2S)-2-[5-amino-1-(5-phospho-beta-D-ribosyl)imidazole-4-carboxamido]succinate + ADP + phosphate + 2 H(+). It functions in the pathway purine metabolism; IMP biosynthesis via de novo pathway; 5-amino-1-(5-phospho-D-ribosyl)imidazole-4-carboxamide from 5-amino-1-(5-phospho-D-ribosyl)imidazole-4-carboxylate: step 1/2. This is Phosphoribosylaminoimidazole-succinocarboxamide synthase from Thioalkalivibrio sulfidiphilus (strain HL-EbGR7).